Consider the following 248-residue polypeptide: DNA polymerase sliding clamp 2 (248 aa).

It belongs to the PCNA family. The subunits circularize to form a toroid; DNA passes through its center. Replication factor C (RFC) is required to load the toroid on the DNA. Forms a dimeric complex with PCNA3 and trimeric complexes PCNA123 and PCNA323; does not form homotrimers. Crystal structures show a heterotetramer of 2 PCNA2 and 2 PCNA3, which would be large enough to clamp a Holliday junction.

In terms of biological role, sliding clamp subunit that acts as a moving platform for DNA processing. Responsible for tethering the catalytic subunit of DNA polymerase and other proteins to DNA during high-speed replication. Both trimeric complexes inhibit DNA ligase and both 3'-5' and 5'-3' activity of Hel308 (Hjm) helicase, but stimulate Hjc, the Holliday junction cleavage enzyme. In Sulfurisphaera tokodaii (strain DSM 16993 / JCM 10545 / NBRC 100140 / 7) (Sulfolobus tokodaii), this protein is DNA polymerase sliding clamp 2.